The following is a 139-amino-acid chain: 10 kDa chaperonin 2, chloroplastic (139 aa).

The N-terminal 39 residues, 1–39 (MASTFVCSLPNPFFAFPVKATTPSTANHTLLGSRRGCLR), are a transit peptide targeting the chloroplast. The segment at 51 to 138 (KVVPQADRVL…CKESDLLALV (88 aa)) is cpn-10 domain.

It belongs to the GroES chaperonin family. In terms of tissue distribution, expressed in leaves and stems. Expressed at low levels in germinating seeds, seedlings, rosettes leaves, flowers and siliques.

It localises to the plastid. It is found in the chloroplast stroma. Functions as a co-chaperone for protein folding in chloroplasts. This Arabidopsis thaliana (Mouse-ear cress) protein is 10 kDa chaperonin 2, chloroplastic.